The primary structure comprises 358 residues: ATPase ASNA1 homolog (358 aa).

Residue 35 to 42 coordinates ATP; the sequence is KGGVGKTT. Asp64 is a catalytic residue. The ATP site is built by Glu235 and Asn262.

Belongs to the arsA ATPase family. As to quaternary structure, homodimer.

It localises to the cytoplasm. Its subcellular location is the endoplasmic reticulum. Functionally, ATPase required for the post-translational delivery of tail-anchored (TA) proteins to the endoplasmic reticulum. Recognizes and selectively binds the transmembrane domain of TA proteins in the cytosol. This complex then targets to the endoplasmic reticulum by membrane-bound receptors, where the tail-anchored protein is released for insertion. This process is regulated by ATP binding and hydrolysis. ATP binding drives the homodimer towards the closed dimer state, facilitating recognition of newly synthesized TA membrane proteins. ATP hydrolysis is required for insertion. Subsequently, the homodimer reverts towards the open dimer state, lowering its affinity for the membrane-bound receptor, and returning it to the cytosol to initiate a new round of targeting. The protein is ATPase ASNA1 homolog of Babesia bovis.